Consider the following 210-residue polypeptide: Thymidylate kinase (210 aa).

9-16 (GLEGAGKS) contributes to the ATP binding site.

The protein belongs to the thymidylate kinase family.

It catalyses the reaction dTMP + ATP = dTDP + ADP. Functionally, phosphorylation of dTMP to form dTDP in both de novo and salvage pathways of dTTP synthesis. This Aliivibrio fischeri (strain ATCC 700601 / ES114) (Vibrio fischeri) protein is Thymidylate kinase.